We begin with the raw amino-acid sequence, 264 residues long: tRNA (guanine-N(1)-)-methyltransferase (264 aa).

Residues Gly-113 and 133–138 (IGDYVL) each bind S-adenosyl-L-methionine. Residues 244-264 (VQQAATPGGQRRPPWHRDSRA) form a disordered region.

The protein belongs to the RNA methyltransferase TrmD family. In terms of assembly, homodimer.

The protein localises to the cytoplasm. It carries out the reaction guanosine(37) in tRNA + S-adenosyl-L-methionine = N(1)-methylguanosine(37) in tRNA + S-adenosyl-L-homocysteine + H(+). Specifically methylates guanosine-37 in various tRNAs. The polypeptide is tRNA (guanine-N(1)-)-methyltransferase (Frankia alni (strain DSM 45986 / CECT 9034 / ACN14a)).